The following is a 109-amino-acid chain: Class I hydrophobin dewE (109 aa).

A signal peptide spans 1–20; sequence MKVATALSVLAVAGSALASA. Cystine bridges form between C34/C87, C40/C81, C41/C74, and C88/C102.

Belongs to the fungal hydrophobin family. In terms of assembly, self-assembles to form functional amyloid fibrils called rodlets. Self-assembly into fibrillar rodlets occurs spontaneously at hydrophobic:hydrophilic interfaces and the rodlets further associate laterally to form amphipathic monolayers.

Its subcellular location is the secreted. The protein resides in the spore wall. Functionally, aerial growth, conidiation, and dispersal of filamentous fungi in the environment rely upon a capability of their secreting small amphipathic proteins called hydrophobins (HPBs) with low sequence identity. Class I can self-assemble into an outermost layer of rodlet bundles on aerial cell surfaces, conferring cellular hydrophobicity that supports fungal growth, development and dispersal; whereas Class II form highly ordered films at water-air interfaces through intermolecular interactions but contribute nothing to the rodlet structure. DewE is a class I hydrophobin that contributes to the hydrophobicity of the spore surface. The protein is Class I hydrophobin dewE of Emericella nidulans (strain FGSC A4 / ATCC 38163 / CBS 112.46 / NRRL 194 / M139) (Aspergillus nidulans).